Here is an 835-residue protein sequence, read N- to C-terminus: MGEEHKPLLDASGVDPREEDKTATAILRRKKKDNMLLVDDAINDDNSVIAINSNTMDKLELFRGDTVLVKGKKRKDTVLIVLIDDELEDGACRINRVVRNNLRIRLGDLVTIHPCPDIKYATRISVLPIADTIEGITGNLFDVFLKPYFVEAYRPVRKGDHFVVRGGMRQVEFKVVDVEPEEYAVVAQDTIIHWEGEPINREDEENNMNEVGYDDIGGCRKQMAQIREMVELPLRHPQLFKAIGIKPPRGVLMYGPPGTGKTLMARAVANETGAFFFLINGPEVMSKMAGESESNLRKAFEEAEKNAPAIIFIDEIDSIAPKRDKTNGEVERRVVSQLLTLMDGMKARSNVVVIAATNRPNSIDPALRRFGRFDREVDIGIPDATGRLEVLRIHTKNMKLADDVDLEALAAETHGYVGADIASLCSEAAMQQIREKMDLIDLDEDEIDAEVLDSLGVTMDNFRFALGNSNPSALRETVVESVNVTWDDVGGLDEIKEELKETVEYPVLHPDQYTKFGLSPSKGVLFYGPPGTGKTLLAKAVATEVSANFISVKGPELLSMWYGESESNIRDIFDKARAAAPTVVFLDELDSIAKARGGSLGDAGGASDRVVNQLLTEMDGMNAKKNVFVIGATNRPDQIDPAILRPGRLDQLIYVPLPDENARLSILNAQLRKTPLEPGLELTAIAKATQGFSGADLLYIVQRAAKYAIKDSIEAHRQHEAEKEVKVEGEDVEMTDEGAKAEQEPEVDPVPYITKEHFAEAMKTAKRSVSDAELRRYEAYSQQMKASRGQFSNFNFNDAPLGTTATDNANSNNSAPSGAGAAFGSNAEEDDDLYS.

The interval 1 to 21 (MGEEHKPLLDASGVDPREEDK) is disordered. An ATP-binding site is contributed by 257 to 263 (PGTGKTL). Residues Lys-305, Lys-322, and Lys-346 each participate in a glycyl lysine isopeptide (Lys-Gly) (interchain with G-Cter in ubiquitin) cross-link. Positions 358 and 394 each coordinate ATP. Ser-472 and Ser-519 each carry phosphoserine. A Glycyl lysine isopeptide (Lys-Gly) (interchain with G-Cter in ubiquitin) cross-link involves residue Lys-522. 531-536 (GTGKTL) contacts ATP. Glycyl lysine isopeptide (Lys-Gly) (interchain with G-Cter in ubiquitin) cross-links involve residues Lys-539, Lys-594, and Lys-673. A compositionally biased stretch (basic and acidic residues) spans 720–729 (EAEKEVKVEG). The segment at 720–746 (EAEKEVKVEGEDVEMTDEGAKAEQEPE) is disordered. Phosphothreonine is present on Thr-735. The residue at position 770 (Ser-770) is a Phosphoserine. The tract at residues 792–835 (SNFNFNDAPLGTTATDNANSNNSAPSGAGAAFGSNAEEDDDLYS) is disordered. Low complexity predominate over residues 802 to 826 (GTTATDNANSNNSAPSGAGAAFGSN).

This sequence belongs to the AAA ATPase family. In terms of assembly, component of the heterotrimeric CDC48-NPL4-UFD1 ATPase complex. The CDC48-NPL4-UFD1 ATPase complex interacts with the HRD1 ubiquitin ligase complex composed of the E3 ligase HRD1, its cofactors HRD3, USA1 and DER1, substrate recruiting factor YOS9 and CDC48-binding protein UBX2. Interaction between the complexes is mediated by interaction between CDC48-NPL4-UFD1 complex member CDC48 and HRD1 complex member UBX2. Forms a complex composed of CDC48, NPL4, UFD1, UFD2 and SHP1. Forms a complex composed of CDC48, NPL4, UFD1, DOA1, SHP1 and deubiquitinase OTU1; within the complex interacts with DOA1/UFD3 and OTU1 to prevent multiubiquitination of substrates. Interacts with UFD2, to add further ubiquitin moieties; the interaction with UFD2 is prevented by DOA1/UFD3. Forms a complex composed of CDC48, DOA1, deubiquitinase UBP3 and probably BRE5; within the complex interacts with DOA1 and UBP3. Interacts (via C-terminus) with DOA1 (via PUL domain); the interaction is direct. Interacts with NPL4. Interacts with SHP1/UBX1, UBX2, UBX3, UBX4, UBX5, UBX6 and UBX7. Interacts with VMS1; the interaction recruits CDC48 to the mitochondria in response to mitochondrial stress. Component of the ribosome quality control complex (RQC), composed of the E3 ubiquitin ligase RKR1/LTN1, RQC1 and RQC2, as well as CDC48 and its ubiquitin-binding cofactors. RQC forms a stable complex with 60S ribosomal subunits. Interacts with ASE1 and CDC5; the interaction is likely to result in their degradation. Component of the DSCc E3 ligase complexes composed of at least TUL1, DSC2, DSC3, UBX3, CDC48 as well as VLD1 for the vacuole-localized complex or GLD1 for the Golgi/endosome-localized complex.

It localises to the microsome. It is found in the endoplasmic reticulum. The protein resides in the cytoplasm. It catalyses the reaction ATP + H2O = ADP + phosphate + H(+). With respect to regulation, the first ATP-binding region has low ATPase activity. The second ATP-binding region is responsible for ATPase activity. ATP binding to the first ATP-binding region induces intrinsic activity of the second ATP-binding region. While ATP binding to the first ATP-binding region appears to prevent ATP hydrolysis by the second ATP-binding region, ADP-binding to first region promotes the coordinate and cooperative ATPase cycle of the second ATP-binding region. ATP binding to the first ATP-binding region induces a conformational change, promoting the rotation of the first ATP-binding region relative to the second ATP-binding region in the hexamer. Its function is as follows. ATP-dependent chaperone which probably uses the energy provided by ATP hydrolysis to generate mechanical force to unfold substrate proteins, disassemble protein complexes, and disaggregate protein aggregates. By recruiting and promoting the degradation of ubiquitinated proteins, plays a role in the ubiquitin fusion degradation (UFD) pathway. Has a role in the endoplasmic reticulum-associated degradation (ERAD) pathway which mediates the cytoplasmic elimination of misfolded proteins exported from the ER. Required for the proteasome-dependent processing/activation of MGA2 and SPT23 transcription factors leading to the subsequent expression of OLE1. Has an additional role in the turnover of OLE1 where it targets ubiquitinated OLE1 and other proteins to the ERAD. Regulates ubiquitin-mediated mitochondria protein degradation. Involved in spindle disassembly probably by promoting the degradation of spindle assembly factors ASE1 and CDC5 at the end of mitosis. Component of the ribosome quality control complex (RQC), a ribosome-associated complex that mediates ubiquitination and extraction of incompletely synthesized nascent chains for proteasomal degradation. CDC48 may provide the mechanical force that dislodges the polyubiquitinated nascent peptides from the exit channel. Required for ribophagy, a process which relocalizes ribosomal particles into the vacuole for degradation in response to starvation. Component of the DSC E3 ubiquitin ligase complexes that tag proteins present in Golgi, endosome and vacuole membranes and function in protein homeostasis under non-stress conditions and support a role in protein quality control. Substrate initially binds through the attached polyubiquitin chain to UDF1/NPL4 and then moves through the pore of the ATPase rings and is thereby unfolded. Acts on a broad range of even well-folded proteins via ubiquitin-binding and unfolding to initiate substrate processing. Involved in degradation of mislocalized tail-anchored transmembrane proteins extracted from the mitochondrion outer membrane by MSP1 and ubiquitinated by DOA10. In Saccharomyces cerevisiae (strain ATCC 204508 / S288c) (Baker's yeast), this protein is Cell division control protein 48.